We begin with the raw amino-acid sequence, 993 residues long: Vacuolar membrane protease (993 aa).

The Cytoplasmic portion of the chain corresponds to 1 to 24 (MSPAMANPRVRKFNPIAFTPLPVT). Residues 25-45 (LITTIVYLAVLILVLVTYLVV) form a helical membrane-spanning segment. Residues 46 to 391 (PPAPTLEMSP…SAFAVFRLHT (346 aa)) are Vacuolar-facing. N-linked (GlcNAc...) asparagine glycans are attached at residues asparagine 59, asparagine 116, and asparagine 119. Zn(2+) contacts are provided by histidine 175 and aspartate 187. The active-site Proton acceptor is the glutamate 221. Glutamate 222 contributes to the Zn(2+) binding site. Residue asparagine 238 is glycosylated (N-linked (GlcNAc...) asparagine). Zn(2+)-binding residues include glutamate 247 and histidine 320. Residues 392 to 412 (LFALSVTLLVSAPLVLFITSI) form a helical membrane-spanning segment. Residues 413–447 (ALSKTDRMYLFSMSKSLGGTSETVSLRGLRGLFRT) lie on the Cytoplasmic side of the membrane. A helical membrane pass occupies residues 448–468 (PIILTVTTVITIGLAYLLEKI). The Vacuolar segment spans residues 469–475 (NPYIVHS). Residues 476–496 (SQFAVWSMMLSVWIFVAWFLA) traverse the membrane as a helical segment. Residues 497–509 (RVADFFRPSALHR) are Cytoplasmic-facing. A helical transmembrane segment spans residues 510–530 (AYSYTWIFIATWIMLVISTVY). Over 531–534 (ANQK) the chain is Vacuolar. The chain crosses the membrane as a helical span at residues 535 to 555 (GIAAGYFIFFYFAAVFLATWV). The Cytoplasmic segment spans residues 556–672 (SYLELFSLPR…WSWTLPRWTW (117 aa)). Residues 579–621 (RRSSSLSSRLLTPSADELPSDIGPNGAENLGDPDETDPTESTS) are disordered. A helical membrane pass occupies residues 673–693 (ILQLLLLAPIVIILVGQVGLL). Over 694–709 (LTTAMSQIGSDGVSTF) the chain is Vacuolar. A helical membrane pass occupies residues 710 to 730 (IVYLACALLSTLLFAPLFPFI). Residues 731 to 737 (HRFTYHV) are Cytoplasmic-facing. A helical membrane pass occupies residues 738–758 (PTFLLLIFIGTLIYNLVAFPF). At 759–993 (SPANRLKIFF…VEASHDFIIQ (235 aa)) the chain is on the vacuolar side. 3 N-linked (GlcNAc...) asparagine glycosylation sites follow: asparagine 806, asparagine 847, and asparagine 955.

Belongs to the peptidase M28 family. Zn(2+) is required as a cofactor.

It is found in the vacuole membrane. Its function is as follows. May be involved in vacuolar sorting and osmoregulation. This is Vacuolar membrane protease from Paracoccidioides lutzii (strain ATCC MYA-826 / Pb01) (Paracoccidioides brasiliensis).